We begin with the raw amino-acid sequence, 343 residues long: MISIVKSKSFGLAAVMTLICSVAGIFLAKLPYVNLIGALVIALLLGISLQVLPVGVREEAAPGIGFISNKFLRLGIILLGFRLNLTKLADAGIKTILVAMLGVSGTIVLTYWLSKKFGAEDELAVLSACGCGICGAAAVMGVSPQIESRDEERKRENEVLAVAVVCVMGTVFTLLEIVIKPMLGLTDSQFGIVAGGSLHEIAHAIAAGSAFGEASLDSALIMKLSRVLLLAPVALIIGYWYQRRLVKESAQDHTQAPKKLPIPWFLGGFILTSILGTFLPFPPVVLDGLVQAAYVFLGMAMAALGISVNFSVIFKRGGTVFGAAAISSTCLMIFMIIMSKLFF.

10 helical membrane passes run 10-27 (FGLAAVMTLICSVAGIFL), 32-54 (YVNLIGALVIALLLGISLQVLPV), 64-86 (IGFISNKFLRLGIILLGFRLNLT), 91-113 (AGIKTILVAMLGVSGTIVLTYWL), 123-145 (LAVLSACGCGICGAAAVMGVSPQ), 157-179 (NEVLAVAVVCVMGTVFTLLEIVI), 219-241 (ALIMKLSRVLLLAPVALIIGYWY), 262-284 (IPWFLGGFILTSILGTFLPFPPV), 288-310 (GLVQAAYVFLGMAMAALGISVNF), and 317-339 (GGTVFGAAAISSTCLMIFMIIMS).

This sequence belongs to the UPF0324 family.

The protein localises to the cell membrane. In Lactobacillus johnsonii (strain CNCM I-12250 / La1 / NCC 533), this protein is UPF0324 membrane protein LJ_1117.